A 125-amino-acid chain; its full sequence is MARVKRSLNAKKKRRVVLSQAKGYRGQRSRLYRKAKEQMLHSMTYAYRDRKDRKGQFRRLWIQRINAASRAHGLTYNRFMQGLKAAGIEVDRRMLAELAVNDAAAFAALVETAKKAIPAPSESAA.

The protein belongs to the bacterial ribosomal protein bL20 family.

Functionally, binds directly to 23S ribosomal RNA and is necessary for the in vitro assembly process of the 50S ribosomal subunit. It is not involved in the protein synthesizing functions of that subunit. The sequence is that of Large ribosomal subunit protein bL20 from Thermobifida fusca (strain YX).